Here is a 145-residue protein sequence, read N- to C-terminus: Transcription antitermination protein NusB (145 aa).

Belongs to the NusB family.

Functionally, involved in transcription antitermination. Required for transcription of ribosomal RNA (rRNA) genes. Binds specifically to the boxA antiterminator sequence of the ribosomal RNA (rrn) operons. This Citrifermentans bemidjiense (strain ATCC BAA-1014 / DSM 16622 / JCM 12645 / Bem) (Geobacter bemidjiensis) protein is Transcription antitermination protein NusB.